The primary structure comprises 458 residues: Exodeoxyribonuclease 7 large subunit (458 aa).

Belongs to the XseA family. As to quaternary structure, heterooligomer composed of large and small subunits.

Its subcellular location is the cytoplasm. It catalyses the reaction Exonucleolytic cleavage in either 5'- to 3'- or 3'- to 5'-direction to yield nucleoside 5'-phosphates.. Its function is as follows. Bidirectionally degrades single-stranded DNA into large acid-insoluble oligonucleotides, which are then degraded further into small acid-soluble oligonucleotides. This is Exodeoxyribonuclease 7 large subunit from Escherichia coli O81 (strain ED1a).